The sequence spans 1155 residues: DNA-directed RNA polymerase subunit beta (1155 aa).

Belongs to the RNA polymerase beta chain family. In terms of assembly, the RNAP catalytic core consists of 2 alpha, 1 beta, 1 beta' and 1 omega subunit. When a sigma factor is associated with the core the holoenzyme is formed, which can initiate transcription.

The enzyme catalyses RNA(n) + a ribonucleoside 5'-triphosphate = RNA(n+1) + diphosphate. Functionally, DNA-dependent RNA polymerase catalyzes the transcription of DNA into RNA using the four ribonucleoside triphosphates as substrates. This is DNA-directed RNA polymerase subunit beta from Borreliella afzelii (strain PKo) (Borrelia afzelii).